A 248-amino-acid chain; its full sequence is Triosephosphate isomerase (248 aa).

11–13 lines the substrate pocket; it reads NWK. Histidine 95 acts as the Electrophile in catalysis. Glutamate 167 serves as the catalytic Proton acceptor. Residues glycine 173, serine 212, and 233-234 each bind substrate; that span reads GG.

The protein belongs to the triosephosphate isomerase family. As to quaternary structure, homodimer.

The protein resides in the cytoplasm. The enzyme catalyses D-glyceraldehyde 3-phosphate = dihydroxyacetone phosphate. It functions in the pathway carbohydrate biosynthesis; gluconeogenesis. Its pathway is carbohydrate degradation; glycolysis; D-glyceraldehyde 3-phosphate from glycerone phosphate: step 1/1. In terms of biological role, involved in the gluconeogenesis. Catalyzes stereospecifically the conversion of dihydroxyacetone phosphate (DHAP) to D-glyceraldehyde-3-phosphate (G3P). The sequence is that of Triosephosphate isomerase from Ralstonia nicotianae (strain ATCC BAA-1114 / GMI1000) (Ralstonia solanacearum).